A 239-amino-acid chain; its full sequence is Interleukin-27 subunit alpha (239 aa).

An N-terminal signal peptide occupies residues 1–28; the sequence is MGQMADDLGWRLSLLLLSLLLARAGVWG. N-linked (GlcNAc...) asparagine glycosylation is present at asparagine 89. The disordered stretch occupies residues 167–186; the sequence is EEENEAGRELLPGAPGGPSK.

Belongs to the IL-6 superfamily. Heterodimer with EBI3; not disulfide-linked. This heterodimer is known as interleukin IL-27. O-glycosylated.

It localises to the secreted. Its function is as follows. Associates with EBI3 to form the IL-27 interleukin, a heterodimeric cytokine which functions in innate immunity. Cytokine with pro- and anti-inflammatory properties, that can regulate T-helper cell development, suppress T-cell proliferation, stimulate cytotoxic T-cell activity, induce isotype switching in B-cells, and that has diverse effects on innate immune cells. Among its target cells are CD4 T-helper cells which can differentiate in type 1 effector cells (TH1), type 2 effector cells (TH2) and IL17 producing helper T-cells (TH17). It drives rapid clonal expansion of naive but not memory CD4 T-cells. It also strongly synergizes with IL-12 to trigger interferon-gamma/IFN-gamma production of naive CD4 T-cells, binds to the cytokine receptor WSX-1/TCCR which appears to be required but not sufficient for IL-27-mediated signal transduction. IL-27 potentiate the early phase of TH1 response and suppress TH2 and TH17 differentiation. It induces the differentiation of TH1 cells via two distinct pathways, p38 MAPK/TBX21- and ICAM1/ITGAL/ERK-dependent pathways. It also induces STAT1, STAT3, STAT4 and STAT5 phosphorylation and activates TBX21/T-Bet via STAT1 with resulting IL12RB2 up-regulation, an event crucial to TH1 cell commitment. It suppresses the expression of GATA3, the inhibitor TH1 cells development. In CD8 T-cells, it activates STATs as well as GZMB. IL-27 reveals to be a potent inhibitor of TH17 cell development and of IL-17 production. Indeed IL27 alone is also able to inhibit the production of IL17 by CD4 and CD8 T-cells. While IL-27 suppressed the development of pro-inflammatory Th17 cells via STAT1, it inhibits the development of anti-inflammatory inducible regulatory T-cells, iTreg, independently of STAT1. IL-27 also has an effect on cytokine production, it suppresses pro-inflammatory cytokine production such as IL2, IL4, IL5 and IL6 and activates suppressors of cytokine signaling such as SOCS1 and SOCS3. Apart from suppression of cytokine production, IL-27 also antagonizes the effects of some cytokines such as IL6 through direct effects on T-cells. Another important role of IL-27 is its antitumor activity as well as its antiangiogenic activity with activation of production of antiangiogenic chemokines such as IP-10/CXCL10 and MIG/CXCL9. In vein endothelial cells, it induces IRF1/interferon regulatory factor 1 and increase the expression of MHC class II transactivator/CIITA with resulting up-regulation of major histocompatibility complex class II. This is Interleukin-27 subunit alpha (IL27) from Sus scrofa (Pig).